We begin with the raw amino-acid sequence, 350 residues long: MFS transporter OpS2 (350 aa).

8 consecutive transmembrane segments (helical) span residues 3–23 (FLAGGASASVAAVGAGTVADL), 34–54 (GYFFLGPMLGPLVSPIIGGIL), 65–85 (WGAVVYGGLVWLSMIFLLPET), 141–161 (FMTCYYASISFACYYILNLAI), 174–194 (AIILGLLYIPSALGSIVASVV), 227–247 (MCENAWIPAFVFPAALLVFGW), 253–273 (IFWFAPIVVTFFFGLGNSLIF), and 312–332 (PLLGAIGTQWLFTGLAVICWA).

The protein belongs to the major facilitator superfamily.

The protein resides in the cell membrane. Functionally, MFS transporter; part of the gene cluster that mediates the biosynthesis of the bibenzoquinone oosporein, a metabolite required for fungal virulence that acts by evading host immunity to facilitate fungal multiplication in insects. The function of this putative MFS transporter remains unclear since its deletion leads to increased oosporein production. The protein is MFS transporter OpS2 of Beauveria bassiana (strain ARSEF 2860) (White muscardine disease fungus).